The primary structure comprises 305 residues: Pseudouridine-5'-phosphate glycosidase (305 aa).

Catalysis depends on glutamate 22, which acts as the Proton donor. Positions 84 and 104 each coordinate substrate. Position 136 (aspartate 136) interacts with Mn(2+). Residue 138 to 140 participates in substrate binding; the sequence is SAD. Lysine 157 serves as the catalytic Nucleophile.

Belongs to the pseudouridine-5'-phosphate glycosidase family. In terms of assembly, homotrimer. The cofactor is Mn(2+).

The catalysed reaction is D-ribose 5-phosphate + uracil = psi-UMP + H2O. Functionally, catalyzes the reversible cleavage of pseudouridine 5'-phosphate (PsiMP) to ribose 5-phosphate and uracil. Functions biologically in the cleavage direction, as part of a pseudouridine degradation pathway. This is Pseudouridine-5'-phosphate glycosidase from Chloroflexus aurantiacus (strain ATCC 29364 / DSM 637 / Y-400-fl).